We begin with the raw amino-acid sequence, 398 residues long: Phosphoglycerate kinase (398 aa).

Substrate-binding positions include 23–25 (DLN), Arg38, 61–64 (HFGR), Arg120, and Arg153. ATP is bound by residues Lys203, Glu325, and 355-358 (GGDT).

This sequence belongs to the phosphoglycerate kinase family. Monomer.

It localises to the cytoplasm. The catalysed reaction is (2R)-3-phosphoglycerate + ATP = (2R)-3-phospho-glyceroyl phosphate + ADP. The protein operates within carbohydrate degradation; glycolysis; pyruvate from D-glyceraldehyde 3-phosphate: step 2/5. This is Phosphoglycerate kinase from Sphingopyxis alaskensis (strain DSM 13593 / LMG 18877 / RB2256) (Sphingomonas alaskensis).